The following is a 283-amino-acid chain: uncharacterized protein (283 aa).

The Proton donor role is filled by tyrosine 55.

This sequence belongs to the aldo/keto reductase family.

It localises to the cytoplasm. The protein resides in the nucleus. This is an uncharacterized protein from Schizosaccharomyces pombe (strain 972 / ATCC 24843) (Fission yeast).